A 413-amino-acid polypeptide reads, in one-letter code: Multifunctional CCA protein (413 aa).

Residues Gly8 and Arg11 each coordinate ATP. CTP contacts are provided by Gly8 and Arg11. 2 residues coordinate Mg(2+): Asp21 and Asp23. ATP contacts are provided by Arg91, Arg137, and Arg140. The CTP site is built by Arg91, Arg137, and Arg140. Residues 228 to 329 (TGVHTLMTLS…VKLFDAIDAW (102 aa)) form the HD domain.

This sequence belongs to the tRNA nucleotidyltransferase/poly(A) polymerase family. Bacterial CCA-adding enzyme type 1 subfamily. In terms of assembly, monomer. Can also form homodimers and oligomers. Requires Mg(2+) as cofactor. Ni(2+) serves as cofactor.

It carries out the reaction a tRNA precursor + 2 CTP + ATP = a tRNA with a 3' CCA end + 3 diphosphate. The enzyme catalyses a tRNA with a 3' CCA end + 2 CTP + ATP = a tRNA with a 3' CCACCA end + 3 diphosphate. Catalyzes the addition and repair of the essential 3'-terminal CCA sequence in tRNAs without using a nucleic acid template. Adds these three nucleotides in the order of C, C, and A to the tRNA nucleotide-73, using CTP and ATP as substrates and producing inorganic pyrophosphate. tRNA 3'-terminal CCA addition is required both for tRNA processing and repair. Also involved in tRNA surveillance by mediating tandem CCA addition to generate a CCACCA at the 3' terminus of unstable tRNAs. While stable tRNAs receive only 3'-terminal CCA, unstable tRNAs are marked with CCACCA and rapidly degraded. The sequence is that of Multifunctional CCA protein from Salmonella typhi.